We begin with the raw amino-acid sequence, 185 residues long: dCTP deaminase, dUMP-forming (185 aa).

Residues 99–104 (KSSIAR), Asp117, 125–127 (TLE), Gln146, Tyr159, Lys166, and Gln170 each bind dCTP. Glu127 acts as the Proton donor/acceptor in catalysis.

The protein belongs to the dCTP deaminase family. In terms of assembly, homotrimer.

It carries out the reaction dCTP + 2 H2O = dUMP + NH4(+) + diphosphate. The protein operates within pyrimidine metabolism; dUMP biosynthesis; dUMP from dCTP: step 1/1. In terms of biological role, bifunctional enzyme that catalyzes both the deamination of dCTP to dUTP and the hydrolysis of dUTP to dUMP without releasing the toxic dUTP intermediate. This chain is dCTP deaminase, dUMP-forming, found in Methanospirillum hungatei JF-1 (strain ATCC 27890 / DSM 864 / NBRC 100397 / JF-1).